We begin with the raw amino-acid sequence, 118 residues long: Large ribosomal subunit protein uL18 (118 aa).

The protein belongs to the universal ribosomal protein uL18 family. Part of the 50S ribosomal subunit; part of the 5S rRNA/L5/L18/L25 subcomplex. Contacts the 5S and 23S rRNAs.

Functionally, this is one of the proteins that bind and probably mediate the attachment of the 5S RNA into the large ribosomal subunit, where it forms part of the central protuberance. This chain is Large ribosomal subunit protein uL18, found in Rickettsia canadensis (strain McKiel).